The primary structure comprises 206 residues: Adenine phosphoribosyltransferase (206 aa).

Belongs to the purine/pyrimidine phosphoribosyltransferase family. As to quaternary structure, homodimer.

It is found in the cytoplasm. It catalyses the reaction AMP + diphosphate = 5-phospho-alpha-D-ribose 1-diphosphate + adenine. It participates in purine metabolism; AMP biosynthesis via salvage pathway; AMP from adenine: step 1/1. Functionally, catalyzes a salvage reaction resulting in the formation of AMP, that is energically less costly than de novo synthesis. In Rhodopirellula baltica (strain DSM 10527 / NCIMB 13988 / SH1), this protein is Adenine phosphoribosyltransferase.